We begin with the raw amino-acid sequence, 291 residues long: N-acetylmannosamine kinase (291 aa).

ATP contacts are provided by residues A5 to K12 and G132 to S139. Zn(2+)-binding residues include H156, C166, C168, and C173.

Belongs to the ROK (NagC/XylR) family. NanK subfamily. In terms of assembly, homodimer.

It carries out the reaction an N-acyl-D-mannosamine + ATP = an N-acyl-D-mannosamine 6-phosphate + ADP + H(+). It participates in amino-sugar metabolism; N-acetylneuraminate degradation; D-fructose 6-phosphate from N-acetylneuraminate: step 2/5. In terms of biological role, catalyzes the phosphorylation of N-acetylmannosamine (ManNAc) to ManNAc-6-P. This is N-acetylmannosamine kinase from Shigella boydii serotype 18 (strain CDC 3083-94 / BS512).